The following is a 376-amino-acid chain: Erythronate-4-phosphate dehydrogenase (376 aa).

Residues serine 45 and threonine 67 each contribute to the substrate site. NAD(+)-binding positions include 127–128 (QV), aspartate 147, and threonine 176. Arginine 209 is a catalytic residue. Aspartate 233 contacts NAD(+). Glutamate 238 is an active-site residue. Histidine 255 (proton donor) is an active-site residue. Glycine 258 contributes to the NAD(+) binding site. A substrate-binding site is contributed by tyrosine 259.

Belongs to the D-isomer specific 2-hydroxyacid dehydrogenase family. PdxB subfamily. In terms of assembly, homodimer.

It is found in the cytoplasm. It catalyses the reaction 4-phospho-D-erythronate + NAD(+) = (R)-3-hydroxy-2-oxo-4-phosphooxybutanoate + NADH + H(+). It functions in the pathway cofactor biosynthesis; pyridoxine 5'-phosphate biosynthesis; pyridoxine 5'-phosphate from D-erythrose 4-phosphate: step 2/5. In terms of biological role, catalyzes the oxidation of erythronate-4-phosphate to 3-hydroxy-2-oxo-4-phosphonooxybutanoate. The polypeptide is Erythronate-4-phosphate dehydrogenase (Aliivibrio fischeri (strain ATCC 700601 / ES114) (Vibrio fischeri)).